Consider the following 551-residue polypeptide: Glucans biosynthesis protein D (551 aa).

The tat-type signal signal peptide spans 1-32; the sequence is MDRRRFIKGSMAMAAVCGTSGIASLFSQAAFA.

Belongs to the OpgD/OpgG family. In terms of processing, predicted to be exported by the Tat system. The position of the signal peptide cleavage has not been experimentally proven.

It localises to the periplasm. It functions in the pathway glycan metabolism; osmoregulated periplasmic glucan (OPG) biosynthesis. Probably involved in the control of the structural glucose backbone of osmoregulated periplasmic glucans (OPGs). The protein is Glucans biosynthesis protein D of Escherichia coli O139:H28 (strain E24377A / ETEC).